Reading from the N-terminus, the 111-residue chain is uncharacterized protein (111 aa).

Its subcellular location is the mitochondrion. This is an uncharacterized protein from Arabidopsis thaliana (Mouse-ear cress).